The primary structure comprises 509 residues: Lengsin (509 aa).

The segment at 1–34 (MNNEEDLLQEDSTRDEGNETEANSMNTLRRTRKK) is disordered. Positions 83–177 (NRLQFVRFEA…VICDTFTVTG (95 aa)) constitute a GS beta-grasp domain. In terms of domain architecture, GS catalytic spans 184-509 (PRYIAKRQLS…ERNKFLEYFI (326 aa)).

It belongs to the glutamine synthetase family. Dodecamer. Interacts with BFSP2 and VIM. In terms of tissue distribution, abundantly expressed in lens.

May act as a component of the cytoskeleton or as a chaperone for the reorganization of intermediate filament proteins during terminal differentiation in the lens. Does not seem to have enzymatic activity. The sequence is that of Lengsin (LGSN) from Homo sapiens (Human).